We begin with the raw amino-acid sequence, 364 residues long: Developmentally-regulated GTP-binding protein 2 (364 aa).

At Lys-21 the chain carries (3S)-3-hydroxylysine. Residues 63-288 form the OBG-type G domain; sequence ARVALIGFPS…LLEMLWEYLA (226 aa). GTP is bound by residues 69–76, 94–98, 115–118, 246–249, and 269–271; these read GFPSVGKS, FTTLT, DLPG, NKID, and SCG. 2 residues coordinate Mg(2+): Ser-76 and Thr-96. Positions 288 to 363 constitute a TGS domain; the sequence is ALTCIYTKKR…EHEDVIQIVK (76 aa).

This sequence belongs to the TRAFAC class OBG-HflX-like GTPase superfamily. OBG GTPase family. In terms of assembly, interacts with RWDD1; this interaction confers protection to polyubiquitination and proteolytic degradation. Interacts with JMJD7; this interaction is direct. It depends on Mg(2+) as a cofactor. In terms of processing, hydroxylated (with S stereochemistry) at C-3 of Lys-21 by JMJD7; this modification hinders trypsin-catalyzed proteolysis in vitro. Polyubiquitinated. Highest levels in skeletal muscle, heart and kidney. Low levels in colon, thymus, spleen, small intestine, lung and Leukocytes.

The protein resides in the nucleus. The protein localises to the cytoplasm. It catalyses the reaction GTP + H2O = GDP + phosphate + H(+). Functionally, catalyzes the conversion of GTP to GDP through hydrolysis of the gamma-phosphate bond in GTP. When hydroxylated at C-3 of 'Lys-21' by JMJD7, may bind to RNA and play a role in translation. This is Developmentally-regulated GTP-binding protein 2 from Homo sapiens (Human).